A 420-amino-acid chain; its full sequence is Serine hydroxymethyltransferase (420 aa).

(6S)-5,6,7,8-tetrahydrofolate-binding positions include Leu-121 and 125 to 127 (GHL). Lys-229 carries the post-translational modification N6-(pyridoxal phosphate)lysine.

It belongs to the SHMT family. In terms of assembly, homodimer. The cofactor is pyridoxal 5'-phosphate.

Its subcellular location is the cytoplasm. It catalyses the reaction (6R)-5,10-methylene-5,6,7,8-tetrahydrofolate + glycine + H2O = (6S)-5,6,7,8-tetrahydrofolate + L-serine. The protein operates within one-carbon metabolism; tetrahydrofolate interconversion. It participates in amino-acid biosynthesis; glycine biosynthesis; glycine from L-serine: step 1/1. Functionally, catalyzes the reversible interconversion of serine and glycine with tetrahydrofolate (THF) serving as the one-carbon carrier. This reaction serves as the major source of one-carbon groups required for the biosynthesis of purines, thymidylate, methionine, and other important biomolecules. Also exhibits THF-independent aldolase activity toward beta-hydroxyamino acids, producing glycine and aldehydes, via a retro-aldol mechanism. In Wigglesworthia glossinidia brevipalpis, this protein is Serine hydroxymethyltransferase.